We begin with the raw amino-acid sequence, 867 residues long: Mitochondrial escape protein 2 (867 aa).

A mitochondrion-targeting transit peptide spans 1–25 (MIIRTLRSQLRLPKPVYISPPCRYY). The Mitochondrial matrix portion of the chain corresponds to 26-279 (STDLEKLKKE…LVSLISNHTK (254 aa)). Positions 179–264 (GTPWIEDLRR…TTLHIQFVAI (86 aa)) constitute an RRM domain. A helical membrane pass occupies residues 280-300 (IAIPVLIALLATFAVLIFDPI). At 301–867 (REWFIEYKIL…DGKSFLGIKF (567 aa)) the chain is on the mitochondrial intermembrane side. The stretch at 795-852 (IGRLISLEAAKIQKLEEELEKIYKIGKVDGRIDYVSQKIEASNKKILDLEKQAADVAS) forms a coiled coil.

It belongs to the YME2 family.

It is found in the mitochondrion inner membrane. Its function is as follows. Plays a role in maintaining the mitochondrial genome and in controlling the mtDNA escape. Involved in the regulation of mtDNA nucleotide structure and number. May have a dispensable role in early maturation of pre-rRNA. This Candida albicans (strain SC5314 / ATCC MYA-2876) (Yeast) protein is Mitochondrial escape protein 2 (PRP13).